Here is a 1090-residue protein sequence, read N- to C-terminus: UPF0507 protein SCY_4172 (1090 aa).

Residues Phe289 to Asn436 enclose the VPS9 domain.

Belongs to the UPF0507 family.

The polypeptide is UPF0507 protein SCY_4172 (Saccharomyces cerevisiae (strain YJM789) (Baker's yeast)).